We begin with the raw amino-acid sequence, 698 residues long: Methionine synthase reductase (698 aa).

Residues 5-147 (LLLYATQQGQ…VVEPWIAGLW (143 aa)) enclose the Flavodoxin-like domain. FMN is bound at residue 93-124 (LLGLGDSEYTYFCNGGKIIDKRLQELGARHFY). A hinge region spans residues 166–247 (ALPVASPASS…ASLNIPGLPP (82 aa)). Residues serine 171 and serine 189 each carry the phosphoserine modification. Residues 271 to 533 (DPVFQVPISK…PRTTNSFHLP (263 aa)) form the FAD-binding FR-type domain. Lysine 291 lines the NADP(+) pocket. Residues 451 to 454 (RPYS) and 487 to 490 (GVCT) each bind FAD. NADP(+) contacts are provided by residues 610–611 (SR), 624–626 (YVQ), and aspartate 659. Residue tryptophan 697 coordinates FAD.

In terms of assembly, forms a multiprotein complex with MMACHC, MMADHC and MTR. Requires FAD as cofactor. The cofactor is FMN. Found in all tissues tested, particularly abundant in skeletal muscle.

It localises to the cytoplasm. It carries out the reaction 2 methylcob(III)alamin-[methionine synthase] + 2 S-adenosyl-L-homocysteine + NADP(+) + H(+) = 2 cob(II)alamin-[methionine synthase] + 2 S-adenosyl-L-methionine + NADPH. It catalyses the reaction 2 cob(II)alamin + A + 2 H2O + 2 H(+) = 2 aquacob(III)alamin + AH2. Key enzyme in methionine and folate homeostasis responsible for the reactivation of methionine synthase (MTR/MS) activity by catalyzing the reductive methylation of MTR-bound cob(II)alamin. Cobalamin (vitamin B12) forms a complex with MTR to serve as an intermediary in methyl transfer reactions that cycles between MTR-bound methylcob(III)alamin and MTR bound-cob(I)alamin forms, and occasional oxidative escape of the cob(I)alamin intermediate during the catalytic cycle leads to the inactive cob(II)alamin species. The processing of cobalamin in the cytosol occurs in a multiprotein complex composed of at least MMACHC, MMADHC, MTRR and MTR which may contribute to shuttle safely and efficiently cobalamin towards MTR in order to produce methionine. Also necessary for the utilization of methyl groups from the folate cycle, thereby affecting transgenerational epigenetic inheritance. Also acts as a molecular chaperone for methionine synthase by stabilizing apoMTR and incorporating methylcob(III)alamin into apoMTR to form the holoenzyme. Also serves as an aquacob(III)alamin reductase by reducing aquacob(III)alamin to cob(II)alamin; this reduction leads to stimulation of the conversion of apoMTR and aquacob(III)alamin to MTR holoenzyme. This is Methionine synthase reductase from Homo sapiens (Human).